Here is an 81-residue protein sequence, read N- to C-terminus: Short neurotoxin 1 (81 aa).

The signal sequence occupies residues 1 to 21 (MKTLLLTLVVVTIVCLDLGYT). 4 disulfide bridges follow: C24–C43, C38–C60, C62–C73, and C74–C79.

This sequence belongs to the three-finger toxin family. Short-chain subfamily. Type I alpha-neurotoxin sub-subfamily. As to expression, expressed by the venom gland.

Its subcellular location is the secreted. Binds to muscle nicotinic acetylcholine receptor (nAChR) and inhibit acetylcholine from binding to the receptor, thereby impairing neuromuscular transmission. This Tropidechis carinatus (Australian rough-scaled snake) protein is Short neurotoxin 1.